The chain runs to 837 residues: Neural cell adhesion molecule 2 (837 aa).

The signal sequence occupies residues 1-19 (MSLLLSFYLLGLLVSSGQA). Topologically, residues 20–697 (LLQVTISLSK…PNIIKDTLFN (678 aa)) are extracellular. 5 Ig-like C2-type domains span residues 21-108 (LQVT…ATVV), 113-202 (QKLT…RDII), 208-297 (PPAI…AFLQ), 302-396 (PHII…MYLD), and 401-491 (PKFI…YILA). Intrachain disulfides connect Cys-42-Cys-93 and Cys-136-Cys-186. Asn-177 and Asn-219 each carry an N-linked (GlcNAc...) asparagine glycan. A disulfide bond links Cys-232 and Cys-281. A glycan (N-linked (GlcNAc...) asparagine) is linked at Asn-309. The cysteines at positions 322 and 380 are disulfide-linked. N-linked (GlcNAc...) asparagine glycans are attached at residues Asn-406, Asn-419, Asn-445, Asn-474, and Asn-562. A disulfide bridge connects residues Cys-422 and Cys-475. Fibronectin type-III domains follow at residues 498-591 (SPYG…TLPV) and 593-688 (EPSP…PPKP). A helical transmembrane segment spans residues 698–718 (GLGLGAVIGLGVAALLLILVV). Topologically, residues 719–837 (TDVSCFFIRQ…IQSKEDDSKA (119 aa)) are cytoplasmic. Residues 764-785 (GSKEPIVEMRTEDERVTNHEDG) are compositionally biased toward basic and acidic residues. Residues 764–818 (GSKEPIVEMRTEDERVTNHEDGSPVNEPNETTPLTEPEKLPLKEEDGKEALNPET) form a disordered region. Ser-765 carries the phosphoserine modification. A Phosphothreonine modification is found at Thr-780. Ser-786 bears the Phosphoserine mark. Positions 789–798 (NEPNETTPLT) are enriched in low complexity. Over residues 799–814 (EPEKLPLKEEDGKEAL) the composition is skewed to basic and acidic residues.

Expressed most strongly in adult and fetal brain.

It is found in the cell membrane. Its function is as follows. May play important roles in selective fasciculation and zone-to-zone projection of the primary olfactory axons. The protein is Neural cell adhesion molecule 2 (NCAM2) of Homo sapiens (Human).